The sequence spans 398 residues: O-methyltransferase penC (398 aa).

Aspartate 263 provides a ligand contact to S-adenosyl-L-methionine. The Proton acceptor role is filled by histidine 305.

The protein belongs to the class I-like SAM-binding methyltransferase superfamily. Cation-independent O-methyltransferase family.

It participates in secondary metabolite biosynthesis. It functions in the pathway alkaloid biosynthesis. The protein operates within mycotoxin biosynthesis. In terms of biological role, O-methyltransferase; part of the gene cluster that mediates the biosynthesis of penigequinolones, potent insecticidal alkaloids that contain a highly modified 10-carbon prenyl group. The first stage is catalyzed by the nonribosomal peptide synthetase penN that condenses anthranilic acid and O-methyl-L-tyrosine to produce 4'-methoxycyclopeptin. 4'-methoxycyclopeptin is then converted to 4'-methoxydehydrocyclopeptin by the ketoglutarate-dependent dioxygenase penM through dehydrogenation to form a double bond between C-alpha and C-beta of the O-methyltyrosine side chain. PenM also converts its first product methoxydehydrocyclopeptin to 4'-methoxycyclopenin. The following conversion of 4'methoxycyclopenin into 4'-methoxyviridicatin is catalyzed by the cyclopenase penL. 4'-methoxyviridicatin is the precursor of quinolone natural products, and is further converted to quinolinone B. The prenyltransferase penI then catalyzes the canonical Friedel-Crafts alkylation of quinolinone B with dimethylallyl cation to yield dimethylallyl quinolone, which is subjected to FAD-dependent dehydrogenation by the FAD-linked oxidoreductase penH to yield conjugated aryl diene. The delta(3') double bond then serves as the site of the second alkylation with DMAPP catalyzed by the prenyltransferase penG to yield a carbenium ion intermediate, which can be attacked by H(2)O to yield a styrenyl quinolone containing a C3'-hydroxyprenyl chain, or undergo cyclization to yield yaequinolones J1 and J2. The conversion of the styrenyl quinolone into the tetrahydrofuran-containing yaequinolone C is performed by the FAD-dependent monooxygenase penE and involves epoxidation of the terminal C7'-C8' olefin, followed by epoxide ring opening initiated by the C3' hydroxyl group. The predicted cysteine hydrolase penJ acts as an epoxide hydrolase that enhances the rate of the 5-exo-tet cyclization step, increasing the yield of yaequinolone C. PenF catalyzes the cationic rearrangement of the epoxide formed by penE (before ring opening to produce yaequinolone C) into yaequinolone D. Finally, the short-chain dehydrogenase/reductase (SDR)-like reductase penD, catalyzes both the dehydration of yaequinolone D and the reduction of the resulting oxonium to yield penigequinolone. The chain is O-methyltransferase penC from Penicillium thymicola.